The sequence spans 112 residues: Putative pterin-4-alpha-carbinolamine dehydratase (112 aa).

It belongs to the pterin-4-alpha-carbinolamine dehydratase family.

The catalysed reaction is (4aS,6R)-4a-hydroxy-L-erythro-5,6,7,8-tetrahydrobiopterin = (6R)-L-erythro-6,7-dihydrobiopterin + H2O. In Hahella chejuensis (strain KCTC 2396), this protein is Putative pterin-4-alpha-carbinolamine dehydratase.